We begin with the raw amino-acid sequence, 338 residues long: Lipoate-protein ligase A (338 aa).

Residues 29–216 (PATQRVLFLW…AFFAHYGEHV (188 aa)) form the BPL/LPL catalytic domain. ATP contacts are provided by residues Arg-71, 76 to 79 (GAVF), and Lys-134. Lys-134 serves as a coordination point for (R)-lipoate.

This sequence belongs to the LplA family. As to quaternary structure, monomer.

The protein localises to the cytoplasm. The catalysed reaction is L-lysyl-[lipoyl-carrier protein] + (R)-lipoate + ATP = N(6)-[(R)-lipoyl]-L-lysyl-[lipoyl-carrier protein] + AMP + diphosphate + H(+). Its pathway is protein modification; protein lipoylation via exogenous pathway; protein N(6)-(lipoyl)lysine from lipoate: step 1/2. It participates in protein modification; protein lipoylation via exogenous pathway; protein N(6)-(lipoyl)lysine from lipoate: step 2/2. Catalyzes both the ATP-dependent activation of exogenously supplied lipoate to lipoyl-AMP and the transfer of the activated lipoyl onto the lipoyl domains of lipoate-dependent enzymes. The polypeptide is Lipoate-protein ligase A (Escherichia coli O17:K52:H18 (strain UMN026 / ExPEC)).